The primary structure comprises 1244 residues: ATP-dependent helicase/nuclease subunit A (1244 aa).

The region spanning 4-475 (KKWTAEQLAA…IGLSKNFRSR (472 aa)) is the UvrD-like helicase ATP-binding domain. 25 to 32 (AAAGAGKT) provides a ligand contact to ATP. A UvrD-like helicase C-terminal domain is found at 515–816 (EDVKTATGPV…RIMSIHKSKG (302 aa)). A disordered region spans residues 538-559 (EQNTDSAEEKLTDGEEQEDLDS).

This sequence belongs to the helicase family. AddA subfamily. As to quaternary structure, heterodimer of AddA and AddB/RexB. Mg(2+) is required as a cofactor.

The catalysed reaction is Couples ATP hydrolysis with the unwinding of duplex DNA by translocating in the 3'-5' direction.. It catalyses the reaction ATP + H2O = ADP + phosphate + H(+). Its function is as follows. The heterodimer acts as both an ATP-dependent DNA helicase and an ATP-dependent, dual-direction single-stranded exonuclease. Recognizes the chi site generating a DNA molecule suitable for the initiation of homologous recombination. The AddA nuclease domain is required for chi fragment generation; this subunit has the helicase and 3' -&gt; 5' nuclease activities. This Desulforamulus reducens (strain ATCC BAA-1160 / DSM 100696 / MI-1) (Desulfotomaculum reducens) protein is ATP-dependent helicase/nuclease subunit A.